Reading from the N-terminus, the 668-residue chain is Transketolase (668 aa).

His-28 is a binding site for substrate. Thiamine diphosphate contacts are provided by residues His-68 and Gly-116–Leu-118. Asp-157 serves as a coordination point for Mg(2+). Gly-158 and Asn-187 together coordinate thiamine diphosphate. Mg(2+)-binding residues include Asn-187 and Ile-189. Substrate is bound by residues His-263, Arg-358, and Ser-385. A thiamine diphosphate-binding site is contributed by His-263. Glu-412 serves as the catalytic Proton donor. Phe-438 contacts thiamine diphosphate. Substrate contacts are provided by His-462, Asp-470, His-474, and Arg-521.

It belongs to the transketolase family. Homodimer. The cofactor is Mg(2+). Requires thiamine diphosphate as cofactor.

The enzyme catalyses D-sedoheptulose 7-phosphate + D-glyceraldehyde 3-phosphate = aldehydo-D-ribose 5-phosphate + D-xylulose 5-phosphate. In terms of biological role, catalyzes the transfer of a two-carbon ketol group from a ketose donor to an aldose acceptor, likely via a covalent intermediate with the cofactor thiamine pyrophosphate. Can use L-erythrulose as donor and D-ribose-5-phosphate as acceptor substrates, forming glycolaldehyde and D-sedoheptulose-7-phosphate. For synthetic purposes, is able to use hydroxypyruvate (HPA) as donor substrate, making the reaction irreversible due to the release of carbon dioxide, and various aldehydes as acceptor substrates, which leads to the corresponding ketoses. Thus, using hydroxypyruvate as donor and three different aldehydes as acceptors, i.e. glycolaldehyde, D-glyceraldehyde and butyraldehyde, the enzyme stereoselectively forms the corresponding products L-erythrulose, D-xylulose and (3S)-1,3-dihydroxyhexan-2-one, respectively. This chain is Transketolase, found in Geobacillus stearothermophilus (Bacillus stearothermophilus).